The sequence spans 166 residues: NAD(P)H-quinone oxidoreductase subunit I, chloroplastic (166 aa).

2 4Fe-4S ferredoxin-type domains span residues 55–84 (GRIH…VDWK) and 95–124 (LNYS…MTEE). C64, C67, C70, C74, C104, C107, C110, and C114 together coordinate [4Fe-4S] cluster.

It belongs to the complex I 23 kDa subunit family. In terms of assembly, NDH is composed of at least 16 different subunits, 5 of which are encoded in the nucleus. It depends on [4Fe-4S] cluster as a cofactor.

The protein resides in the plastid. It localises to the chloroplast thylakoid membrane. The enzyme catalyses a plastoquinone + NADH + (n+1) H(+)(in) = a plastoquinol + NAD(+) + n H(+)(out). It carries out the reaction a plastoquinone + NADPH + (n+1) H(+)(in) = a plastoquinol + NADP(+) + n H(+)(out). In terms of biological role, NDH shuttles electrons from NAD(P)H:plastoquinone, via FMN and iron-sulfur (Fe-S) centers, to quinones in the photosynthetic chain and possibly in a chloroplast respiratory chain. The immediate electron acceptor for the enzyme in this species is believed to be plastoquinone. Couples the redox reaction to proton translocation, and thus conserves the redox energy in a proton gradient. This is NAD(P)H-quinone oxidoreductase subunit I, chloroplastic from Aphanactis jamesoniana.